The chain runs to 316 residues: Ribosomal RNA small subunit methyltransferase H (316 aa).

S-adenosyl-L-methionine is bound by residues Ala-35–His-37, Asp-55, Phe-84, Asp-105, and Gln-112.

Belongs to the methyltransferase superfamily. RsmH family.

The protein resides in the cytoplasm. The enzyme catalyses cytidine(1402) in 16S rRNA + S-adenosyl-L-methionine = N(4)-methylcytidine(1402) in 16S rRNA + S-adenosyl-L-homocysteine + H(+). Specifically methylates the N4 position of cytidine in position 1402 (C1402) of 16S rRNA. The chain is Ribosomal RNA small subunit methyltransferase H from Streptococcus gordonii (strain Challis / ATCC 35105 / BCRC 15272 / CH1 / DL1 / V288).